The sequence spans 792 residues: MNEKSLRVLEYNKIIDLLKKKASSSLGLKYIENLVPNTDFVEVKSMLEETSEAQSIIIKRGSVGLEGIHDIEDKVKRAYIGASLDPGSLIMIADTLRVARRLRNSLSSSDEEDFNYPIIQSLSNSLYVYKDIEDQIYNAIISEVEISDNASSILRDIRRRIAQKNQSIRSKLNSIISSTTYQKYLQDAIISLRGDRFVVPVKSEYRSQVAGIVHDQSSSGATLFIEPMTIVEMNNELRQLKLGEQEEIERILSELSAMVGEVSEDLISNQEILGRLDFAFSKGKLSIQMRGIEPTLNEDKYLNIKNGRHPLLDKKKVVANTIYLGRDFHTLVITGPNTGGKTVTIKTVGLFALMTQSGLHIPADYGSSMCVYDNVFADIGDEQSIEQSLSTFSSHMTNIVSILQNVTADSLVIFDELGAGTDPVEGAALAIAVLEDINSVGAKCIATTHYSELKNYALTKSGVENAAVEFDIETLSPTYKLLIGVPGKSNAFEISRKLGLSDYVISRAKEYINTENIALEDVLQNVEKNRIKAVEDREEAERLKEEIEKLKVEYDEKLEKLVSQRDKMIEKAKSEAFSIIRQAKEEVDIIIKELRSLEQERASKEKNRKIEELRKELTSSMGSLQPTVKSMIVPKVSNKEIKDLKPGEEVKVITLNQNGSVVSVDKKRKEAVVQIGIMKMTLPFKSLQKTRKDVSTNVTKSTRNIIRSKSGSVKNEVDLRGLNLEEAIMEVEKYLDDAYVAGLESVTVIHGIGTGVLKAGLQDILRRNRHVKSQRGGQYGEGGAGVTIVKLK.

An ATP-binding site is contributed by 335–342 (GPNTGGKT). The Smr domain occupies 717-792 (VDLRGLNLEE…GAGVTIVKLK (76 aa)).

This sequence belongs to the DNA mismatch repair MutS family. MutS2 subfamily. Homodimer. Binds to stalled ribosomes, contacting rRNA.

Its function is as follows. Endonuclease that is involved in the suppression of homologous recombination and thus may have a key role in the control of bacterial genetic diversity. In terms of biological role, acts as a ribosome collision sensor, splitting the ribosome into its 2 subunits. Detects stalled/collided 70S ribosomes which it binds and splits by an ATP-hydrolysis driven conformational change. Acts upstream of the ribosome quality control system (RQC), a ribosome-associated complex that mediates the extraction of incompletely synthesized nascent chains from stalled ribosomes and their subsequent degradation. Probably generates substrates for RQC. The chain is Endonuclease MutS2 from Clostridioides difficile (strain 630) (Peptoclostridium difficile).